A 317-amino-acid polypeptide reads, in one-letter code: ATP synthase gamma chain (317 aa).

The protein belongs to the ATPase gamma chain family. In terms of assembly, F-type ATPases have 2 components, CF(1) - the catalytic core - and CF(0) - the membrane proton channel. CF(1) has five subunits: alpha(3), beta(3), gamma(1), delta(1), epsilon(1). CF(0) has three main subunits: a, b and c.

It is found in the cellular thylakoid membrane. Functionally, produces ATP from ADP in the presence of a proton gradient across the membrane. The gamma chain is believed to be important in regulating ATPase activity and the flow of protons through the CF(0) complex. The chain is ATP synthase gamma chain from Acaryochloris marina (strain MBIC 11017).